A 224-amino-acid chain; its full sequence is Virulence transcriptional regulatory protein PhoP (224 aa).

The Response regulatory domain maps to 3–117 (RVLVVEDNAL…EVMARMQALM (115 aa)). D52 bears the 4-aspartylphosphate mark. Residues 125–223 (SQVINISPFQ…VRGQGYLFEL (99 aa)) constitute a DNA-binding region (ompR/PhoB-type).

In terms of processing, phosphorylated by PhoQ.

It localises to the cytoplasm. In terms of biological role, member of the two-component regulatory system PhoQ/PhoP which regulates the expression of genes involved in virulence and resistance to host defense antimicrobial peptides. Promotes intramacrophage survival of S.typhi. Is required to enhance bacterial resistance to bile in the human intestinal cells. The sequence is that of Virulence transcriptional regulatory protein PhoP (phoP) from Salmonella typhi.